A 533-amino-acid chain; its full sequence is Beta-glucosidase 10 (533 aa).

The first 23 residues, 1-23, serve as a signal peptide directing secretion; the sequence is MAVAGAMVMSGGVLLLLLAFTCA. Q53 provides a ligand contact to a beta-D-glucoside. N-linked (GlcNAc...) asparagine glycosylation is present at N122. A beta-D-glucoside-binding positions include H157 and 202 to 203; that span reads NE. The Proton donor role is filled by E203. C222 and C230 are disulfide-bonded. Position 369 (Y369) interacts with a beta-D-glucoside. A glycan (N-linked (GlcNAc...) asparagine) is linked at N384. E440 is a binding site for a beta-D-glucoside. E440 (nucleophile) is an active-site residue. The N-linked (GlcNAc...) asparagine glycan is linked to N448. A beta-D-glucoside contacts are provided by residues W489, 496–497, and F505; that span reads EW.

The protein belongs to the glycosyl hydrolase 1 family.

The enzyme catalyses Hydrolysis of terminal, non-reducing beta-D-glucosyl residues with release of beta-D-glucose.. This chain is Beta-glucosidase 10 (BGLU10), found in Oryza sativa subsp. japonica (Rice).